We begin with the raw amino-acid sequence, 515 residues long: Serine/threonine-protein phosphatase PP-Z (515 aa).

Residues 1-186 are disordered; that stretch reads MGQGSSKHAD…SSTDPDDPET (186 aa). The segment covering 17–30 has biased composition (polar residues); it reads PSFSRSDTQGSIKS. Position 18 is a phosphoserine (serine 18). Over residues 40–51 the composition is skewed to basic and acidic residues; it reads KGKDSNHDRRTS. The segment covering 63–74 has biased composition (pro residues); that stretch reads ETPPSLPPPPSP. Polar residues predominate over residues 91–109; sequence DSGNSSQSPTSPHPSNQPA. The segment covering 126-143 has biased composition (low complexity); it reads SSSSYAVSPTSPTSPTSS. Mn(2+) contacts are provided by aspartate 248, histidine 250, aspartate 276, and asparagine 308. Catalysis depends on histidine 309, which acts as the Proton donor. Residues histidine 357 and histidine 432 each contribute to the Mn(2+) site. Phosphoserine is present on residues serine 505 and serine 514.

Belongs to the PPP phosphatase family. PP-Z subfamily. Mn(2+) is required as a cofactor.

It localises to the cytoplasm. The catalysed reaction is O-phospho-L-seryl-[protein] + H2O = L-seryl-[protein] + phosphate. It carries out the reaction O-phospho-L-threonyl-[protein] + H2O = L-threonyl-[protein] + phosphate. The sequence is that of Serine/threonine-protein phosphatase PP-Z (pzh1) from Schizosaccharomyces pombe (strain 972 / ATCC 24843) (Fission yeast).